The sequence spans 162 residues: Probable chemoreceptor glutamine deamidase CheD 3 (162 aa).

The protein belongs to the CheD family.

It catalyses the reaction L-glutaminyl-[protein] + H2O = L-glutamyl-[protein] + NH4(+). Its function is as follows. Probably deamidates glutamine residues to glutamate on methyl-accepting chemotaxis receptors (MCPs), playing an important role in chemotaxis. The polypeptide is Probable chemoreceptor glutamine deamidase CheD 3 (Geobacter sulfurreducens (strain ATCC 51573 / DSM 12127 / PCA)).